A 1840-amino-acid chain; its full sequence is Sodium channel protein type 4 subunit alpha (1840 aa).

Residues 1-131 (MASSSLPNLV…RVAIKVLIHA (131 aa)) lie on the Cytoplasmic side of the membrane. Basic and acidic residues predominate over residues 36–60 (EARLQRNKQMEIEEPERKPRSDLEA). Positions 36-63 (EARLQRNKQMEIEEPERKPRSDLEAGKN) are disordered. An I repeat occupies 113-448 (LLSPFSIVRR…VVAMAYAEQN (336 aa)). Residues 132–150 (LFSMFIMITILTNCVFMTM) form a helical membrane-spanning segment. At 151–157 (SNPPSWS) the chain is on the extracellular side. The helical transmembrane segment at 158-178 (KHVEYTFTGIYTFESLIKMLA) threads the bilayer. Over 179 to 192 (RGFCIDDFTFLRDP) the chain is Cytoplasmic. The helical transmembrane segment at 193–210 (WNWLDFSVITMAYVTEFV) threads the bilayer. The Extracellular portion of the chain corresponds to 211-216 (DLGNIS). A helical membrane pass occupies residues 217–233 (ALRTFRVLRALKTITVI). Topologically, residues 234-252 (PGLKTIVGALIQSVKKLSD) are cytoplasmic. Residues 253–272 (VMILTVFCLSVFALVGLQLF) form a helical membrane-spanning segment. Residues 273–385 (MGNLRQKCVR…PNYGYTSYDT (113 aa)) lie on the Extracellular side of the membrane. A disulfide bridge connects residues Cys-280 and Cys-354. N-linked (GlcNAc...) asparagine glycosylation is found at Asn-288, Asn-291, Asn-297, Asn-303, Asn-309, Asn-315, Asn-327, and Asn-356. An intrachain disulfide couples Cys-363 to Cys-369. Residues 386 to 410 (FSWAFLALFRLMTQDYWENLFQLTL) constitute an intramembrane region (pore-forming). The Extracellular portion of the chain corresponds to 411–417 (RAAGKTY). The helical transmembrane segment at 418-438 (MIFFVVIIFLGSFYLINLILA) threads the bilayer. Residues 439-572 (VVAMAYAEQN…HIIYLIVMDP (134 aa)) lie on the Cytoplasmic side of the membrane. The disordered stretch occupies residues 481–522 (AAQALESGEEADGDPTHNKDCNGSLDASGEKGPPRPSCSADS). Phosphoserine is present on Ser-487. An II repeat occupies 554–826 (CCAPWVKFKH…QIAIGRIKWG (273 aa)). The helical transmembrane segment at 573–591 (FVDLGITICIVLNTLFMAM) threads the bilayer. The Extracellular segment spans residues 592–602 (EHYPMTEHFDN). A helical transmembrane segment spans residues 603-622 (VLSVGNLVFTGIFTAEMVLK). At 623–636 (LIAMDPYEYFQQGW) the chain is on the cytoplasmic side. A helical transmembrane segment spans residues 637-656 (NIFDSFIVTLSLVELGLANV). Residues 657 to 658 (QG) are Extracellular-facing. A helical transmembrane segment spans residues 659–676 (LSVLRSFRLLRVFKLAKS). Topologically, residues 677–692 (WPTLNMLIKIIGNSVG) are cytoplasmic. The chain crosses the membrane as a helical span at residues 693 to 711 (ALGNLTLVLAIIVFIFAVV). At 712 to 740 (GMQLFGKSYKECVCKIASDCNLPRWHMND) the chain is on the extracellular side. Cysteines 725 and 731 form a disulfide. The segment at residues 741–761 (FFHSFLIVFRILCGEWIETMW) is an intramembrane region (pore-forming). The Extracellular portion of the chain corresponds to 762 to 772 (DCMEVAGQAMC). A disulfide bridge connects residues Cys-763 and Cys-772. Residues 773 to 791 (LTVFLMVMVIGNLVVLNLF) traverse the membrane as a helical segment. At 792–1025 (LALLLSSFSA…ACFKIVEHNW (234 aa)) the chain is on the cytoplasmic side. Disordered regions lie at residues 854 to 884 (EPGG…LKDN) and 925 to 983 (DLEM…GEQP). A compositionally biased stretch (basic and acidic residues) spans 868 to 884 (EDEKKEPPPEDKELKDN). Composition is skewed to acidic residues over residues 925-940 (DLEM…FSEP) and 968-983 (EDPE…GEQP). An III repeat occupies 1006-1319 (RGKMWWTLRR…KKYYNAMKKL (314 aa)). Residues 1026–1043 (FETFIVFMILLSSGALAF) form a helical membrane-spanning segment. The Extracellular portion of the chain corresponds to 1044-1056 (EDIYIEQRRVIRT). The helical transmembrane segment at 1057-1075 (ILEYADKVFTYIFILEMLL) threads the bilayer. The Cytoplasmic segment spans residues 1076–1089 (KWVAYGFKVYFTNA). A helical transmembrane segment spans residues 1090 to 1108 (WCWLDFLIVDVSIISLVAN). Topologically, residues 1109-1116 (WLGYSELG) are extracellular. The chain crosses the membrane as a helical span at residues 1117–1135 (PIKSLRTLRALRPLRALSR). Residues 1136–1152 (FEGMRVVVNALLGAIPS) are Cytoplasmic-facing. The helical transmembrane segment at 1153 to 1172 (IMNVLLVCLIFWLIFSIMGV) threads the bilayer. Residues 1173 to 1223 (NLFAGKFYYCVNTTTSERFDISVVNNKSESESLMYTGQVRWMNVKVNYDNV) are Extracellular-facing. Asn-1198 carries N-linked (GlcNAc...) asparagine glycosylation. An intramembrane region (pore-forming) is located at residues 1224–1245 (GLGYLSLLQVATFKGWMDIMYA). Residues 1246 to 1262 (AVDSREKEEQPHYEVNL) are Extracellular-facing. Residues 1263-1284 (YMYLYFVIFIIFGSFFTLNLFI) form a helical membrane-spanning segment. Residues 1285–1347 (GVIIDNFNQQ…MVYDFVTKQV (63 aa)) are Cytoplasmic-facing. Residues 1303-1305 (IFM) are important for rapid channel inactivation. The stretch at 1328 to 1626 (IPRPQNKIQG…WEKFDPDATQ (299 aa)) is one IV repeat. Residues 1348–1365 (FDISIMILICLNMVTMMV) traverse the membrane as a helical segment. Residues 1366-1376 (ETDDQSQLKVD) lie on the Extracellular side of the membrane. A helical transmembrane segment spans residues 1377-1395 (ILYNINMVFIIIFTGECVL). Residues 1396–1407 (KMFALRHYYFTI) are Cytoplasmic-facing. A helical transmembrane segment spans residues 1408-1425 (GWNIFDFVVVILSIVGLA). Topologically, residues 1426 to 1438 (LSDLIQKYFVSPT) are extracellular. Residues 1439 to 1455 (LFRVIRLARIGRVLRLI) traverse the membrane as a helical segment. Over 1456–1474 (RGAKGIRTLLFALMMSLPA) the chain is Cytoplasmic. Residues 1475–1492 (LFNIGLLLFLVMFIYSIF) traverse the membrane as a helical segment. Residues 1493 to 1514 (GMSNFAYVKKESGIDDMFNFET) lie on the Extracellular side of the membrane. Positions 1515-1537 (FGNSIICLFEITTSAGWDGLLNP) form an intramembrane region, pore-forming. Residues 1538 to 1567 (ILNSGPPDCDPTLENPGTNVRGDCGNPSIG) are Extracellular-facing. Cys-1546 and Cys-1561 form a disulfide bridge. Residues 1568–1590 (ICFFCSYIIISFLIVVNMYIAII) traverse the membrane as a helical segment. The Cytoplasmic segment spans residues 1591–1840 (LENFNVATEE…VRPGVKESLV (250 aa)). Residues 1720–1749 (EEVCAIKIQRAYRRHLLQRSVKQASYMYRH) form the IQ domain. The interval 1775–1840 (HEKEGDGVQS…VRPGVKESLV (66 aa)) is disordered. Positions 1804 to 1813 (PTSSSDTALT) are enriched in low complexity. Residues 1814–1824 (PSPPPLPPSSS) are compositionally biased toward pro residues.

The protein belongs to the sodium channel (TC 1.A.1.10) family. Nav1.4/SCN4A subfamily. The Nav1.4 voltage-gated sodium channel consists of an ion-conducting alpha subunit SCN4A which is functional on its own and a regulatory beta subunit SCN1B. SCN1B strongly enhances the presence of SCN4A at the cell surface. SCN1B is also required for rapid channel inactivation and recovery after inactivation. It prevents the decrease of channel activity in response to repetitive, high-frequency depolarizations. Interacts with the syntrophins SNTA1, SNTB1 and SNTB2 (via PDZ domain); probably links SCN4A to the actin cytoskeleton and the extracellular matrix via the dystrophin-associated protein complex and regulates its localization in muscle cells. Interacts with TMEM233; probable regulator of the channel. As to expression, detected in skeletal muscle.

The protein localises to the cell membrane. The catalysed reaction is Na(+)(in) = Na(+)(out). Its activity is regulated as follows. Potently inhibited by tetrodotoxin and saxitoxin. Inhibited by the conotoxin GVIIJ. Functionally, pore-forming subunit of Nav1.4, a voltage-gated sodium (Nav) channel that directly mediates the depolarizing phase of action potentials in excitable membranes. Navs, also called VGSCs (voltage-gated sodium channels) or VDSCs (voltage-dependent sodium channels), operate by switching between closed and open conformations depending on the voltage difference across the membrane. In the open conformation they allow Na(+) ions to selectively pass through the pore, along their electrochemical gradient. The influx of Na+ ions provokes membrane depolarization, initiating the propagation of electrical signals throughout cells and tissues. Highly expressed in skeletal muscles, Nav1.4 generates the action potential crucial for muscle contraction. The chain is Sodium channel protein type 4 subunit alpha from Rattus norvegicus (Rat).